The following is a 954-amino-acid chain: Glycine dehydrogenase (decarboxylating) (954 aa).

Lysine 701 carries the post-translational modification N6-(pyridoxal phosphate)lysine.

It belongs to the GcvP family. The glycine cleavage system is composed of four proteins: P, T, L and H. Requires pyridoxal 5'-phosphate as cofactor.

It carries out the reaction N(6)-[(R)-lipoyl]-L-lysyl-[glycine-cleavage complex H protein] + glycine + H(+) = N(6)-[(R)-S(8)-aminomethyldihydrolipoyl]-L-lysyl-[glycine-cleavage complex H protein] + CO2. In terms of biological role, the glycine cleavage system catalyzes the degradation of glycine. The P protein binds the alpha-amino group of glycine through its pyridoxal phosphate cofactor; CO(2) is released and the remaining methylamine moiety is then transferred to the lipoamide cofactor of the H protein. The protein is Glycine dehydrogenase (decarboxylating) of Bordetella parapertussis (strain 12822 / ATCC BAA-587 / NCTC 13253).